We begin with the raw amino-acid sequence, 92 residues long: Small ribosomal subunit protein uS19 (92 aa).

This sequence belongs to the universal ribosomal protein uS19 family.

Functionally, protein S19 forms a complex with S13 that binds strongly to the 16S ribosomal RNA. In Methylocella silvestris (strain DSM 15510 / CIP 108128 / LMG 27833 / NCIMB 13906 / BL2), this protein is Small ribosomal subunit protein uS19.